The sequence spans 359 residues: Hsp70-binding protein 1 (359 aa).

Residues 1–71 (MSDEGSRGSR…PPPEPMSEER (71 aa)) are disordered. Over residues 23 to 37 (SSGGGGGGSSAGGSG) the composition is skewed to gly residues. 4 ARM repeats span residues 132–174 (ENMD…TCSQ), 177–217 (AAIQ…CLVR), 220–259 (EAGLLQFLRLDGFSVLMRAMQQQVQKLKVKSAFLLQNLLV), and 262–301 (PEHKGTLCSMGMVQQLVALVRTEHSPFHEHVLGALCSLVT). 2 positions are modified to phosphoserine: Ser-351 and Ser-356.

As to quaternary structure, interacts with the ATP-binding domain of HSPA1A. Detected in a ternary complex containing STUB1, HSPA1A and HSPBP1. Interacts with PGLYRP1; this interaction blocks the cytotoxic activity of the PGLYRP1-HSPA1A complex. Ubiquitous.

Inhibits HSPA1A chaperone activity by changing the conformation of the ATP-binding domain of HSPA1A and interfering with ATP binding. Interferes with ubiquitination mediated by STUB1 and inhibits chaperone-assisted degradation of immature CFTR. In Homo sapiens (Human), this protein is Hsp70-binding protein 1.